A 387-amino-acid chain; its full sequence is 3-ketoacyl-CoA thiolase (387 aa).

C91 (acyl-thioester intermediate) is an active-site residue. Catalysis depends on proton acceptor residues H343 and C373.

This sequence belongs to the thiolase-like superfamily. Thiolase family. Heterotetramer of two alpha chains (FadB) and two beta chains (FadA).

It localises to the cytoplasm. The enzyme catalyses an acyl-CoA + acetyl-CoA = a 3-oxoacyl-CoA + CoA. Its pathway is lipid metabolism; fatty acid beta-oxidation. Catalyzes the final step of fatty acid oxidation in which acetyl-CoA is released and the CoA ester of a fatty acid two carbons shorter is formed. This Shewanella baltica (strain OS185) protein is 3-ketoacyl-CoA thiolase.